The following is a 297-amino-acid chain: uncharacterized protein (297 aa).

3 disordered regions span residues 1–20 (MDTLPPATSEESFEIPNADV), 39–100 (IEKD…ENLG), and 174–297 (VQKA…NEDQ). Residues 101 to 179 (NDLFVSGIAS…RVLNVQKAKR (79 aa)) enclose the RRM domain. S184 is modified (phosphoserine). Composition is skewed to basic and acidic residues over residues 209–223 (GGYRRNNYRDRDSNR) and 233–253 (PQREHSPGNYRKERYNVDSRP). Residues 254–263 (RRERHFHGRS) are compositionally biased toward basic residues. The segment covering 287-297 (SHSSVPPNEDQ) has biased composition (polar residues).

Its subcellular location is the nucleus. This is an uncharacterized protein from Schizosaccharomyces pombe (strain 972 / ATCC 24843) (Fission yeast).